We begin with the raw amino-acid sequence, 301 residues long: Ribonuclease H2 subunit A (301 aa).

Methionine 1 is subject to N-acetylmethionine. In terms of domain architecture, RNase H type-2 spans 28-251 (PCVLGVDEAG…AQAILEKEAE (224 aa)). Aspartate 34, glutamate 35, and aspartate 142 together coordinate a divalent metal cation. Residue threonine 217 is modified to Phosphothreonine. A compositionally biased stretch (acidic residues) spans 255–264 (WEDSEAEEDP). The disordered stretch occupies residues 255-284 (WEDSEAEEDPERPGKITSYFSQGPQTCRPQ). A Phosphoserine modification is found at serine 258. The span at 272–282 (SYFSQGPQTCR) shows a compositional bias: polar residues.

Belongs to the RNase HII family. Eukaryotic subfamily. As to quaternary structure, the RNase H2 complex is a heterotrimer composed of the catalytic subunit RNASEH2A and the non-catalytic subunits RNASEH2B and RNASEH2C. It depends on Mn(2+) as a cofactor. Requires Mg(2+) as cofactor.

The protein localises to the nucleus. The enzyme catalyses Endonucleolytic cleavage to 5'-phosphomonoester.. Catalytic subunit of RNase HII, an endonuclease that specifically degrades the RNA of RNA:DNA hybrids. Participates in DNA replication, possibly by mediating the removal of lagging-strand Okazaki fragment RNA primers during DNA replication. Mediates the excision of single ribonucleotides from DNA:RNA duplexes. The protein is Ribonuclease H2 subunit A (Rnaseh2a) of Mus musculus (Mouse).